Here is a 319-residue protein sequence, read N- to C-terminus: Tetrahydromethanopterin S-methyltransferase subunit H (319 aa).

Belongs to the MtrH family. In terms of assembly, the complex is composed of 8 subunits; MtrA, MtrB, MtrC, MtrD, MtrE, MtrF, MtrG and MtrH.

It carries out the reaction 5-methyl-5,6,7,8-tetrahydromethanopterin + coenzyme M + 2 Na(+)(in) = 5,6,7,8-tetrahydromethanopterin + methyl-coenzyme M + 2 Na(+)(out). Its pathway is one-carbon metabolism; methanogenesis from CO(2); methyl-coenzyme M from 5,10-methylene-5,6,7,8-tetrahydromethanopterin: step 2/2. Functionally, part of a complex that catalyzes the formation of methyl-coenzyme M and tetrahydromethanopterin from coenzyme M and methyl-tetrahydromethanopterin. This is an energy-conserving, sodium-ion translocating step. MtrH catalyzes the transfer of the methyl group from methyl-tetrahydromethanopterin to the corrinoid prosthetic group of MtrA. This Methanococcus aeolicus (strain ATCC BAA-1280 / DSM 17508 / OCM 812 / Nankai-3) protein is Tetrahydromethanopterin S-methyltransferase subunit H.